A 125-amino-acid polypeptide reads, in one-letter code: Probable prefoldin subunit 6 (125 aa).

Belongs to the prefoldin subunit beta family. Heterohexamer of two PFD-alpha type and four PFD-beta type subunits.

In terms of biological role, binds specifically to cytosolic chaperonin (c-CPN) and transfers target proteins to it. Binds to nascent polypeptide chain and promotes folding in an environment in which there are many competing pathways for nonnative proteins. In Drosophila melanogaster (Fruit fly), this protein is Probable prefoldin subunit 6.